A 703-amino-acid polypeptide reads, in one-letter code: Elongation factor G (703 aa).

One can recognise a tr-type G domain in the interval 9 to 292 (ERTRNIGIMA…AVVDYLPGPL (284 aa)). GTP-binding positions include 18-25 (AHIDAGKT), 91-95 (DTPGH), and 145-148 (NKMD).

It belongs to the TRAFAC class translation factor GTPase superfamily. Classic translation factor GTPase family. EF-G/EF-2 subfamily.

The protein resides in the cytoplasm. Its function is as follows. Catalyzes the GTP-dependent ribosomal translocation step during translation elongation. During this step, the ribosome changes from the pre-translocational (PRE) to the post-translocational (POST) state as the newly formed A-site-bound peptidyl-tRNA and P-site-bound deacylated tRNA move to the P and E sites, respectively. Catalyzes the coordinated movement of the two tRNA molecules, the mRNA and conformational changes in the ribosome. The chain is Elongation factor G from Leuconostoc citreum (strain KM20).